The chain runs to 447 residues: Tubulin beta-2 chain (447 aa).

Residues Q9, E67, S136, G140, T141, G142, N202, and N224 each contribute to the GTP site. E67 contributes to the Mg(2+) binding site. Residues 411–425 (SNMNDLVSEYQQYQD) are compositionally biased toward polar residues. The interval 411–447 (SNMNDLVSEYQQYQDATAEEDEYEEEEEDYHQEHDEM) is disordered. Residues 427–440 (TAEEDEYEEEEEDY) show a composition bias toward acidic residues.

Belongs to the tubulin family. In terms of assembly, dimer of alpha and beta chains. A typical microtubule is a hollow water-filled tube with an outer diameter of 25 nm and an inner diameter of 15 nM. Alpha-beta heterodimers associate head-to-tail to form protofilaments running lengthwise along the microtubule wall with the beta-tubulin subunit facing the microtubule plus end conferring a structural polarity. Microtubules usually have 13 protofilaments but different protofilament numbers can be found in some organisms and specialized cells. It depends on Mg(2+) as a cofactor.

It localises to the cytoplasm. The protein localises to the cytoskeleton. Functionally, tubulin is the major constituent of microtubules, a cylinder consisting of laterally associated linear protofilaments composed of alpha- and beta-tubulin heterodimers. Microtubules grow by the addition of GTP-tubulin dimers to the microtubule end, where a stabilizing cap forms. Below the cap, tubulin dimers are in GDP-bound state, owing to GTPase activity of alpha-tubulin. The polypeptide is Tubulin beta-2 chain (TUBB2) (Pisum sativum (Garden pea)).